Here is a 562-residue protein sequence, read N- to C-terminus: Protein KASH5 (562 aa).

Topologically, residues 1–521 (MDLPEGPVGG…PQRLRVTRHP (521 aa)) are cytoplasmic. The tract at residues 125-153 (ALTSRQLPSGCPEAEEPANLESFGGEDPR) is disordered. Residues 164–349 (SSLEDLELSN…LEEQLSQTYE (186 aa)) adopt a coiled-coil conformation. The interval 407–481 (ETSEETEFPS…DIPENPPERP (75 aa)) is disordered. The segment covering 431 to 448 (AHPEEGRKEPSMWLTRRE) has biased composition (basic and acidic residues). Residues 522 to 542 (LIPAPVLGLLLLLLLSVLLLG) form a helical; Anchor for type IV membrane protein membrane-spanning segment. An interaction with SUN1 region spans residues 541–562 (LGPSPPPTWPHLQLCYLQPPPV). At 543 to 562 (PSPPPTWPHLQLCYLQPPPV) the chain is on the perinuclear space side.

As to quaternary structure, core component the LINC complex which is composed of inner nuclear membrane SUN domain-containing proteins coupled to outer nuclear membrane KASH domain-containing nesprins. SUN and KASH domain-containing proteins seem to bind each other promiscuously; however, differentially expression of LINC complex constituents is giving rise to specific assemblies. At least SUN1/2-containing core LINC complexes are proposed to be hexameric composed of three protomers of each KASH and SUN domain-containing protein. Interacts with SUN1; this interaction mediates its telomere localization by forming a SUN1:KASH5 LINC complex. Component of a probable SUN2:KASH5 LINC complex. Self-associates. Interacts with DYNC1H1, DCTN1, DYNC1I1/2 and PAFAH1B1; suggesting the association with the dynein-dynactin motor complex. In terms of tissue distribution, expressed in testis (at protein level).

It localises to the nucleus outer membrane. It is found in the nucleus. The protein resides in the chromosome. The protein localises to the telomere. Its subcellular location is the nucleus envelope. In terms of biological role, as a component of the LINC (LInker of Nucleoskeleton and Cytoskeleton) complex, involved in the connection between the nuclear lamina and the cytoskeleton. The nucleocytoplasmic interactions established by the LINC complex play an important role in the transmission of mechanical forces across the nuclear envelope and in nuclear movement and positioning. Required for telomere attachment to nuclear envelope in the prophase of meiosis. Required for rapid telomere prophase movements implicating a SUN1/2:KASH5 LINC complex in which SUN1 and SUN2 seem to act at least partial redundantly. Required for homolog pairing during meiotic prophase in spermatocytes and probably oocytes. Essential for male and female gametogenesis. Recruits cytoplasmic dynein to telomere attachment sites at the nuclear envelope in spermatocytes. In oocytes is involved in meiotic resumption and spindle formation. This chain is Protein KASH5, found in Homo sapiens (Human).